The sequence spans 101 residues: Large ribosomal subunit protein eL43 (101 aa).

Zn(2+) is bound by residues Cys-40, Cys-43, Cys-59, and Cys-62. The C4-type zinc-finger motif lies at 40–62 (CPSCRSLVRLERIAFGIWRCPKC).

This sequence belongs to the eukaryotic ribosomal protein eL43 family. Putative zinc-binding subfamily. Part of the 50S ribosomal subunit. Zn(2+) is required as a cofactor.

In terms of biological role, binds to the 23S rRNA. In Pyrobaculum aerophilum (strain ATCC 51768 / DSM 7523 / JCM 9630 / CIP 104966 / NBRC 100827 / IM2), this protein is Large ribosomal subunit protein eL43.